The sequence spans 101 residues: Small ribosomal subunit protein uS10 (101 aa).

This sequence belongs to the universal ribosomal protein uS10 family. Part of the 30S ribosomal subunit.

In terms of biological role, involved in the binding of tRNA to the ribosomes. The protein is Small ribosomal subunit protein uS10 of Brachyspira pilosicoli (Serpulina pilosicoli).